The following is a 481-amino-acid chain: PRAME family member 22 (481 aa).

One copy of the LRR 1; degenerate repeat lies at 99-126; sequence RWKLQVLELRDVDENFWTIWSGARPLSC. The LRR 2; degenerate repeat unit spans residues 181 to 205; sequence HLCCTKVVNYSMSILNFRNILETVY. An LRR 3; degenerate repeat occupies 206–232; it reads PDSIQVLEIWNMCWPCMIVEFSRYLSQ. The stretch at 233–267 is one LRR 4; degenerate repeat; that stretch reads MRNLRKLFISDGCRYLLSSDSQEQLVAEFSSVLLR. 5 LRR repeats span residues 268-293, 294-325, 326-344, 350-377, and 378-402; these read LEYLQMLYVRRVCFFRGHLDQLIRCL, RSPLETLALTYGFLEKVDLKCLPRYPSLSQLK, QLNLSHGALRFIRLEPLRA, AATLQTLFLVDCGIRDSKLRVILPALSC, and CSNLTTFCFHGNDTSMDGLKDLLRH.

The protein belongs to the PRAME family.

The sequence is that of PRAME family member 22 from Homo sapiens (Human).